The sequence spans 230 residues: Ribonuclease 3 (230 aa).

The RNase III domain maps to 10–133; that stretch reads DPRLQSRIGY…IIGAIYVDSN (124 aa). Mg(2+) is bound at residue glutamate 46. Aspartate 50 is an active-site residue. Residues aspartate 119 and glutamate 122 each contribute to the Mg(2+) site. Glutamate 122 is a catalytic residue. In terms of domain architecture, DRBM spans 161–230; that stretch reads DPKSRLQEYL…AAEILKLLEQ (70 aa).

It belongs to the ribonuclease III family. As to quaternary structure, homodimer. Mg(2+) is required as a cofactor.

The protein localises to the cytoplasm. It carries out the reaction Endonucleolytic cleavage to 5'-phosphomonoester.. Digests double-stranded RNA. Involved in the processing of primary rRNA transcript to yield the immediate precursors to the large and small rRNAs (23S and 16S). Processes some mRNAs, and tRNAs when they are encoded in the rRNA operon. Processes pre-crRNA and tracrRNA of type II CRISPR loci if present in the organism. In Acinetobacter baylyi (strain ATCC 33305 / BD413 / ADP1), this protein is Ribonuclease 3.